A 603-amino-acid polypeptide reads, in one-letter code: Nuclear receptor subfamily 2 group C member 1 (603 aa).

Residues Met-1–Met-178 are required for interaction with KAT2B. Positions Phe-110–Cys-185 form a DNA-binding region, nuclear receptor. NR C4-type zinc fingers lie at residues Cys-113–Cys-133 and Cys-149–Cys-168. A phosphoserine mark is found at Ser-197 and Ser-215. Phosphothreonine is present on Thr-220. Thr-222 carries the post-translational modification Phosphothreonine; by MAPK1. A Glycyl lysine isopeptide (Lys-Gly) (interchain with G-Cter in SUMO); alternate cross-link involves residue Lys-250. A Glycyl lysine isopeptide (Lys-Gly) (interchain with G-Cter in SUMO2); alternate cross-link involves residue Lys-250. The NR LBD domain occupies Gly-348 to Glu-590. Phosphoserine; by PKC is present on Ser-581. The interval Pro-584–Ile-603 is required for interaction with NRIP1. Lys-588 participates in a covalent cross-link: Glycyl lysine isopeptide (Lys-Gly) (interchain with G-Cter in SUMO2).

This sequence belongs to the nuclear hormone receptor family. NR2 subfamily. Homodimer. Heterodimer; binds DNA as a heterodimer with NR2C2 required for chromatin remodeling and for binding to promoter regions such as globin DR1 repeats. Interacts with ESR1; the interaction prevents homodimerization of ESR1 and suppresses its transcriptional activity and cell growth. Interacts with NRIP1 (via its LXXLL motifs); the interaction provides corepressor activity. Interacts with HDAC3 (via the DNA-binding domain). Interacts with HDAC4 (via the DNA-binding domain). Interacts with PIAS1; the interaction is required for sumoylation of NR2C1. Interacts with UBE2I; the interaction is required for sumoylation of NR2C1. Interacts with KAT2B; the interaction acts as a corepressor of gene expression. Sumoylation requires both PIAS1 and UBE2I. Sumoylation appears to dissociate NR2C1 from the PML nuclear bodies. Enhances the interaction with NRIP1 but inhibits interaction with KAT2B. In proliferating cells, stimulation by all-trans retinoic acid, activation of MAPK1-mediated phosphorylation and recruitment to PML bodies with subsequent sumoylation, suppresses OCT4 expression. In terms of processing, phosphorylated on several serine and threonine residues. Phosphorylation on Thr-220, stimulated by all-trans retinoic acid (atRA) mediates PML location and sumoylation in proliferating cells which then modulates its association with effector molecules, KAT2B and NRIP1. Phosphorylation on Ser-581 by PKC is important for protein stability and function as activator of RARB.

The protein resides in the nucleus. The protein localises to the PML body. In terms of biological role, orphan nuclear receptor. Binds the IR7 element in the promoter of its own gene in an autoregulatory negative feedback mechanism. Primarily repressor of a broad range of genes. Binds to hormone response elements (HREs) consisting of two 5'-AGGTCA-3' half site direct repeat consensus sequences. Together with NR2C2, forms the core of the DRED (direct repeat erythroid-definitive) complex that represses embryonic and fetal globin transcription. Also activator of OCT4 gene expression. May be involved in stem cell proliferation and differentiation. Mediator of retinoic acid-regulated preadipocyte proliferation. The chain is Nuclear receptor subfamily 2 group C member 1 (NR2C1) from Macaca fascicularis (Crab-eating macaque).